Reading from the N-terminus, the 347-residue chain is Terpene synthase 2 (347 aa).

Positions 103, 247, 251, and 255 each coordinate Mg(2+). The D(D/E)XX(D/E) motif motif lies at 103-107 (DDLLE). The NSE motif signature appears at 247-255 (NDIFSLKKE). Residues 329–336 (WCSKSTRY) carry the WxxxxxRY motif motif.

The protein belongs to the terpene synthase family. The cofactor is Mg(2+).

Functionally, terpene synthase that may be involved in the production of volatile terpenoids. Does not show detectable terpene products with either farnesyl diphosphate (FPP) or geranyl diphosphate (GPP). P.polycephalum has a unique biology and these volatile terpenoids could function in internal communication of P.polycephalum, to mark the territory that have been explored, or they may be involved in chemotaxis. In Physarum polycephalum (Slime mold), this protein is Terpene synthase 2.